Here is a 456-residue protein sequence, read N- to C-terminus: MPYIPHTPNDTKEMLTAVGAQDIQDLFDEIPASLQYAGFQSIPAGINEMEMLKEAQNQAQKNRNGICFIGAGCYEHHIPAAVWDIASRGEFLTAYTPYQAEASQGTLQLLYEYQTMICELTGMEVSNASMYDGATALAEAVLMAVRLNKHSKTNRVLITGTVHPFYRETIETIVRNQHIEVITLPFDEQQGITDFGSLNQYTGEDITALVIAQPNFFGCLEQVDKMTSWAHHNKTISVACVNPTSLALLKPPCSWGEHGVEIVCGEGQPLGSPMASGGPYFGFLSTRMAHVRQMPGRIIGRTVDKDGKTGFSLTLQAREQHIRRAKATSNICTNQGLLVTAATIYMSLLGPEGLSQVATQCHQNTHELITALTQIEGVELAFKAPFFHEALIKLNQPVQSVLQQLADAGIAGGYAPEQHYPQLANTLLVCATEVRSAEDIAKYAKTLKTIMSKRGA.

It belongs to the GcvP family. N-terminal subunit subfamily. As to quaternary structure, the glycine cleavage system is composed of four proteins: P, T, L and H. In this organism, the P 'protein' is a heterodimer of two subunits.

It carries out the reaction N(6)-[(R)-lipoyl]-L-lysyl-[glycine-cleavage complex H protein] + glycine + H(+) = N(6)-[(R)-S(8)-aminomethyldihydrolipoyl]-L-lysyl-[glycine-cleavage complex H protein] + CO2. The glycine cleavage system catalyzes the degradation of glycine. The P protein binds the alpha-amino group of glycine through its pyridoxal phosphate cofactor; CO(2) is released and the remaining methylamine moiety is then transferred to the lipoamide cofactor of the H protein. The sequence is that of Probable glycine dehydrogenase (decarboxylating) subunit 1 from Legionella pneumophila (strain Paris).